The primary structure comprises 190 residues: UPF0340 protein BCE33L5016 (190 aa).

This sequence belongs to the UPF0340 family.

This chain is UPF0340 protein BCE33L5016, found in Bacillus cereus (strain ZK / E33L).